Consider the following 67-residue polypeptide: Large ribosomal subunit protein bL35 (67 aa).

The protein belongs to the bacterial ribosomal protein bL35 family.

The sequence is that of Large ribosomal subunit protein bL35 from Deinococcus geothermalis (strain DSM 11300 / CIP 105573 / AG-3a).